A 328-amino-acid polypeptide reads, in one-letter code: Organic solute transporter alpha-like protein (328 aa).

Residues 1–44 (MNASENYFTMDPTENISQVLDQNRNNTNSLRTHPTVEEYYENMT) are Extracellular-facing. Residues Asn2, Asn15, Asn25, and Asn42 are each glycosylated (N-linked (GlcNAc...) asparagine). The chain crosses the membrane as a helical span at residues 45-65 (AFLSLAIFIASLLTILNISIF). Over 66-84 (ATTVSRLRRHLDKPLLGPS) the chain is Cytoplasmic. The helical transmembrane segment at 85–105 (IMMVGLYPIISVAALVTILVP) threads the bilayer. Position 106 (Tyr106) is a topological domain, extracellular. Residues 107 to 127 (SWFICHTVMHVMFMVGGPVFR) form a helical membrane-spanning segment. Residues 128 to 177 (TLLFRYVGSEQNYVKETAGEAVQLNTPPCCCCCLCLPMVIPTKAKLCISR) lie on the Cytoplasmic side of the membrane. The chain crosses the membrane as a helical span at residues 178-198 (YMVWQMPFWQGSIMLVMNILY). The Extracellular portion of the chain corresponds to 199–208 (YRDIQLYRQV). Residues 209–229 (MFFFIPFIVCSIVLGAWSLQI) form a helical membrane-spanning segment. At 230 to 247 (TVRMITKVRGDYQLRKKM) the chain is on the cytoplasmic side. A helical membrane pass occupies residues 248–265 (FCLQLVVMLCKLQYLVLY). The Extracellular portion of the chain corresponds to 266-287 (DQLDGIKMGGEYPINHTVYKQT). An N-linked (GlcNAc...) asparagine glycan is attached at Asn280. The chain crosses the membrane as a helical span at residues 288–308 (IINILILVEMVLVSMMVQSAY). Over 309-328 (RTPVQVQIDEVNKEKEVTRI) the chain is Cytoplasmic.

This sequence belongs to the OST-alpha family.

Its subcellular location is the cell membrane. Functionally, probable transporter. This chain is Organic solute transporter alpha-like protein, found in Drosophila melanogaster (Fruit fly).